We begin with the raw amino-acid sequence, 381 residues long: Chaperone protein DnaJ (381 aa).

One can recognise a J domain in the interval 3 to 66; sequence DYYETLGVER…DKRRMYDSGV (64 aa). Residues 129–211 form a CR-type zinc finger; the sequence is GGTAHVKINT…CMGHGRVRTT (83 aa). Zn(2+) is bound by residues C142, C145, C159, C162, C185, C188, C199, and C202. CXXCXGXG motif repeat units follow at residues 142–149, 159–166, 185–192, and 199–206; these read CQECGGSG, CPDCHGQG, CERCEGHG, and CPSCMGHG. Positions 355-381 are disordered; the sequence is ATHVSQASRPQAGQKKGFFSKLKDALS. The span at 356-365 shows a compositional bias: polar residues; it reads THVSQASRPQ.

It belongs to the DnaJ family. As to quaternary structure, homodimer. Zn(2+) serves as cofactor.

It localises to the cytoplasm. Its function is as follows. Participates actively in the response to hyperosmotic and heat shock by preventing the aggregation of stress-denatured proteins and by disaggregating proteins, also in an autonomous, DnaK-independent fashion. Unfolded proteins bind initially to DnaJ; upon interaction with the DnaJ-bound protein, DnaK hydrolyzes its bound ATP, resulting in the formation of a stable complex. GrpE releases ADP from DnaK; ATP binding to DnaK triggers the release of the substrate protein, thus completing the reaction cycle. Several rounds of ATP-dependent interactions between DnaJ, DnaK and GrpE are required for fully efficient folding. Also involved, together with DnaK and GrpE, in the DNA replication of plasmids through activation of initiation proteins. This Bifidobacterium longum (strain NCC 2705) protein is Chaperone protein DnaJ.